Here is an 874-residue protein sequence, read N- to C-terminus: Alanine--tRNA ligase (874 aa).

Zn(2+)-binding residues include His562, His566, Cys664, and His668.

This sequence belongs to the class-II aminoacyl-tRNA synthetase family. The cofactor is Zn(2+).

Its subcellular location is the cytoplasm. It catalyses the reaction tRNA(Ala) + L-alanine + ATP = L-alanyl-tRNA(Ala) + AMP + diphosphate. Its function is as follows. Catalyzes the attachment of alanine to tRNA(Ala) in a two-step reaction: alanine is first activated by ATP to form Ala-AMP and then transferred to the acceptor end of tRNA(Ala). Also edits incorrectly charged Ser-tRNA(Ala) and Gly-tRNA(Ala) via its editing domain. In Shewanella oneidensis (strain ATCC 700550 / JCM 31522 / CIP 106686 / LMG 19005 / NCIMB 14063 / MR-1), this protein is Alanine--tRNA ligase.